The primary structure comprises 110 residues: U1-lycotoxin-Ls1ee (110 aa).

An N-terminal signal peptide occupies residues 1 to 20 (MKFVLLFGVLLVTLFSYSSA). The propeptide occupies 21–44 (EMLDDFDQADEDELLSLIEKEEAR). Intrachain disulfides connect C47–C62, C54–C71, C61–C89, and C73–C87.

It belongs to the neurotoxin 19 (CSTX) family. 03 subfamily. Expressed by the venom gland.

It localises to the secreted. This chain is U1-lycotoxin-Ls1ee, found in Lycosa singoriensis (Wolf spider).